Consider the following 237-residue polypeptide: Uridylate kinase (237 aa).

12 to 15 (KLSG) provides a ligand contact to ATP. The segment at 20–25 (GEDGLG) is involved in allosteric activation by GTP. Gly-54 is a binding site for UMP. Residues Gly-55 and Arg-59 each contribute to the ATP site. UMP is bound by residues Asp-74 and 135–142 (TGNPFFTT). Residues Thr-162, Tyr-168, and Asp-171 each contribute to the ATP site.

Belongs to the UMP kinase family. Homohexamer.

Its subcellular location is the cytoplasm. It catalyses the reaction UMP + ATP = UDP + ADP. It participates in pyrimidine metabolism; CTP biosynthesis via de novo pathway; UDP from UMP (UMPK route): step 1/1. With respect to regulation, allosterically activated by GTP. Inhibited by UTP. Functionally, catalyzes the reversible phosphorylation of UMP to UDP. The chain is Uridylate kinase from Haemophilus influenzae (strain PittGG).